The primary structure comprises 291 residues: Popeye domain-containing protein 3 (291 aa).

A glycan (N-linked (GlcNAc...) asparagine) is linked at N4. Transmembrane regions (helical) follow at residues 27 to 44 (GAIY…FMGG), 48 to 70 (FGLL…WAWV), and 77 to 99 (IFSW…AYQV).

It belongs to the popeye family. Expressed in cardiac and skeletal muscle.

The protein resides in the membrane. Functionally, may play a role in the maintenance of heart function mediated, at least in part, through cAMP-binding. May play a role in the regulation of KCNK2-mediated current amplitude. This Mus musculus (Mouse) protein is Popeye domain-containing protein 3 (Popdc3).